A 98-amino-acid chain; its full sequence is uncharacterized protein (98 aa).

This is an uncharacterized protein from Rickettsia prowazekii (strain Madrid E).